The primary structure comprises 125 residues: UPF0763 protein NAMH_0545 (125 aa).

This sequence belongs to the UPF0763 family.

This Nautilia profundicola (strain ATCC BAA-1463 / DSM 18972 / AmH) protein is UPF0763 protein NAMH_0545.